Reading from the N-terminus, the 353-residue chain is Glutamate 5-kinase (353 aa).

Lys-8 is an ATP binding site. 3 residues coordinate substrate: Ser-47, Asp-134, and Asn-146. 198-204 (TGGIRSK) lines the ATP pocket. In terms of domain architecture, PUA spans 262–339 (AGKIYVNKGA…SDLKKILGYE (78 aa)).

The protein belongs to the glutamate 5-kinase family.

It localises to the cytoplasm. The catalysed reaction is L-glutamate + ATP = L-glutamyl 5-phosphate + ADP. The protein operates within amino-acid biosynthesis; L-proline biosynthesis; L-glutamate 5-semialdehyde from L-glutamate: step 1/2. Catalyzes the transfer of a phosphate group to glutamate to form L-glutamate 5-phosphate. The chain is Glutamate 5-kinase from Thermotoga maritima (strain ATCC 43589 / DSM 3109 / JCM 10099 / NBRC 100826 / MSB8).